Consider the following 771-residue polypeptide: MRLYLFTLLVTVFSGVSTKSPIFGPQEVSSIEGDSVSITCYYPDTSVNRHTRKYWCRQGASGMCTTLISSNGYLSKEYSGRANLINFPENNTFVINIEQLTQDDTGSYKCGLGTSNRGLSFDVSLEVSQVPELPSDTHVYTKDIGRNVTIECPFKRENAPSKKSLCKKTNQSCELVIDSTEKVNPSYIGRAKLFMKGTDLTVFYVNISHLTHNDAGLYICQAGEGPSADKKNVDLQVLAPEPELLYKDLRSSVTFECDLGREVANEAKYLCRMNKETCDVIINTLGKRDPDFEGRILITPKDDNGRFSVLITGLRKEDAGHYQCGAHSSGLPQEGWPIQTWQLFVNEESTIPNRRSVVKGVTGGSVAIACPYNPKESSSLKYWCRWEGDGNGHCPVLVGTQAQVQEEYEGRLALFDQPGNGTYTVILNQLTTEDAGFYWCLTNGDSRWRTTIELQVAEATREPNLEVTPQNATAVLGETFTVSCHYPCKFYSQEKYWCKWSNKGCHILPSHDEGARQSSVSCDQSSQLVSMTLNPVSKEDEGWYWCGVKQGQTYGETTAIYIAVEERTRGSSHVNPTDANARAKVALEEEVVDSSISEKENKAIPNPGPFANEREIQNVGDQAQENRASGDAGSADGQSRSSSSKVLFSTLVPLGLVLAVGAIAVWVARVRHRKNVDRMSISSYRTDISMADFKNSRDLGGNDNMGASPDTQQTVIEGKDEIVTTTECTAEPEESKKAKRSSKEEADMAYSAFLLQSSTIAAQVHDGPQEA.

A signal peptide spans 1 to 18; it reads MRLYLFTLLVTVFSGVST. At 19-645 the chain is on the extracellular side; that stretch reads KSPIFGPQEV…DGQSRSSSSK (627 aa). In terms of domain architecture, Ig-like V-type 1; required for binding to polymeric IgA and IgM spans 21–120; the sequence is PIFGPQEVSS…GLGTSNRGLS (100 aa). The cysteines at positions 40 and 110 are disulfide-linked. Asn-90, Asn-147, Asn-170, and Asn-206 each carry an N-linked (GlcNAc...) asparagine glycan. Ig-like V-type domains follow at residues 135-237, 245-351, 352-457, and 463-563; these read SDTH…DLQV, LYKD…ESTI, PNRR…LQVA, and PNLE…IYIA. Disulfide bonds link Cys-152/Cys-220, Cys-257/Cys-324, and Cys-370/Cys-440. 2 N-linked (GlcNAc...) asparagine glycosylation sites follow: Asn-420 and Asn-471. A disulfide bridge connects residues Cys-484 and Cys-546. The tract at residues 622-641 is disordered; sequence QAQENRASGDAGSADGQSRS. Residues 627 to 641 show a composition bias toward low complexity; the sequence is RASGDAGSADGQSRS. A helical transmembrane segment spans residues 646–668; the sequence is VLFSTLVPLGLVLAVGAIAVWVA. The Cytoplasmic portion of the chain corresponds to 669–771; that stretch reads RVRHRKNVDR…AQVHDGPQEA (103 aa). 4 positions are modified to phosphoserine: Ser-680, Ser-689, Ser-696, and Ser-742.

As to quaternary structure, interacts (mainly via CDR1-like domain) with dimeric IgA. Interacts (mainly via CDR2-like domain) with pentameric IgM. Either free or part of the secretory IgA (sIgA) complex that consists of two, four or five IgA monomers, and two additional non-Ig polypeptides, namely the JCHAIN and the secretory component (the proteolytic product of PIGR). Free secretory component interacts with bacterial antigens toxA of C.difficile and eae of E.coli. Post-translationally, N-glycosylated. N-glycosylation is required for anchoring IgA molecules to mucus, but is not necessary for Ig binding.

The protein localises to the cell membrane. The protein resides in the secreted. Functionally, mediates selective transcytosis of polymeric IgA and IgM across mucosal epithelial cells. Binds polymeric IgA and IgM at the basolateral surface of epithelial cells. The complex is then transported across the cell to be secreted at the apical surface. During this process, a cleavage occurs that separates the extracellular (known as the secretory component) from the transmembrane segment. Through its N-linked glycans ensures anchoring of secretory IgA (sIgA) molecules to mucus lining the epithelial surface to neutralize extracellular pathogens. On its own (free form) may act as a non-specific microbial scavenger to prevent pathogen interaction with epithelial cells. The protein is Polymeric immunoglobulin receptor (Pigr) of Mus musculus (Mouse).